Here is a 281-residue protein sequence, read N- to C-terminus: Bifunctional protein FolD (281 aa).

NADP(+) is bound by residues 159-161 (NRS), Ser-184, and Ile-225.

It belongs to the tetrahydrofolate dehydrogenase/cyclohydrolase family. Homodimer.

The enzyme catalyses (6R)-5,10-methylene-5,6,7,8-tetrahydrofolate + NADP(+) = (6R)-5,10-methenyltetrahydrofolate + NADPH. The catalysed reaction is (6R)-5,10-methenyltetrahydrofolate + H2O = (6R)-10-formyltetrahydrofolate + H(+). It functions in the pathway one-carbon metabolism; tetrahydrofolate interconversion. Its function is as follows. Catalyzes the oxidation of 5,10-methylenetetrahydrofolate to 5,10-methenyltetrahydrofolate and then the hydrolysis of 5,10-methenyltetrahydrofolate to 10-formyltetrahydrofolate. In Thermoplasma volcanium (strain ATCC 51530 / DSM 4299 / JCM 9571 / NBRC 15438 / GSS1), this protein is Bifunctional protein FolD.